A 145-amino-acid polypeptide reads, in one-letter code: Large ribosomal subunit protein uL16 (145 aa).

It belongs to the universal ribosomal protein uL16 family. As to quaternary structure, part of the 50S ribosomal subunit.

Functionally, binds 23S rRNA and is also seen to make contacts with the A and possibly P site tRNAs. In Lactobacillus johnsonii (strain CNCM I-12250 / La1 / NCC 533), this protein is Large ribosomal subunit protein uL16.